The chain runs to 250 residues: Phosphoribosylaminoimidazole-succinocarboxamide synthase (250 aa).

This sequence belongs to the SAICAR synthetase family.

The catalysed reaction is 5-amino-1-(5-phospho-D-ribosyl)imidazole-4-carboxylate + L-aspartate + ATP = (2S)-2-[5-amino-1-(5-phospho-beta-D-ribosyl)imidazole-4-carboxamido]succinate + ADP + phosphate + 2 H(+). Its pathway is purine metabolism; IMP biosynthesis via de novo pathway; 5-amino-1-(5-phospho-D-ribosyl)imidazole-4-carboxamide from 5-amino-1-(5-phospho-D-ribosyl)imidazole-4-carboxylate: step 1/2. This is Phosphoribosylaminoimidazole-succinocarboxamide synthase from Bifidobacterium longum subsp. infantis (strain ATCC 15697 / DSM 20088 / JCM 1222 / NCTC 11817 / S12).